Here is a 396-residue protein sequence, read N- to C-terminus: uncharacterized protein (396 aa).

This sequence belongs to the mycobacterial PPE family.

This is an uncharacterized protein from Mycobacterium tuberculosis (strain ATCC 25618 / H37Rv).